A 214-amino-acid chain; its full sequence is Outer-membrane lipoprotein LolB (214 aa).

The N-terminal stretch at 1–25 is a signal peptide; sequence MNNLKRFTESIFSCIALSTLLFLGG. A lipid anchor (N-palmitoyl cysteine) is attached at cysteine 26. Cysteine 26 carries the S-diacylglycerol cysteine lipid modification.

This sequence belongs to the LolB family. In terms of assembly, monomer.

The protein localises to the cell outer membrane. Functionally, plays a critical role in the incorporation of lipoproteins in the outer membrane after they are released by the LolA protein. This chain is Outer-membrane lipoprotein LolB, found in Shewanella putrefaciens (strain CN-32 / ATCC BAA-453).